Reading from the N-terminus, the 632-residue chain is Extracellular metalloproteinase 2 (632 aa).

An N-terminal signal peptide occupies residues 1-19; it reads MHGLLLAGLAAALPLGVAG. The propeptide occupies 20-244; it reads LPARQQSGLS…VHNVVDYVAS (225 aa). The N-linked (GlcNAc...) asparagine glycan is linked to N270. H429 contributes to the Zn(2+) binding site. E430 is an active-site residue. H433 lines the Zn(2+) pocket.

It belongs to the peptidase M36 family. It depends on Zn(2+) as a cofactor.

It is found in the secreted. Functionally, secreted metalloproteinase probably acting as a virulence factor. This chain is Extracellular metalloproteinase 2 (MEP2), found in Trichophyton rubrum (Athlete's foot fungus).